Here is a 129-residue protein sequence, read N- to C-terminus: Protein HMF1 (129 aa).

Residue lysine 52 forms a Glycyl lysine isopeptide (Lys-Gly) (interchain with G-Cter in ubiquitin) linkage.

Belongs to the RutC family.

It is found in the cytoplasm. The protein resides in the nucleus. The protein localises to the mitochondrion intermembrane space. The sequence is that of Protein HMF1 (HMF1) from Saccharomyces cerevisiae (strain ATCC 204508 / S288c) (Baker's yeast).